The sequence spans 293 residues: Undecaprenyl-diphosphatase (293 aa).

8 helical membrane passes run 3–23 (IALA…EFLP), 43–63 (KGKI…CWEF), 85–105 (VNVI…GKWI), 109–129 (LFNP…ILLA), 178–198 (FALV…MLFG), 203–223 (VATE…TVYE), 238–258 (IFAV…RWLL), and 269–289 (FAWY…TGVI).

It belongs to the UppP family.

It is found in the cell inner membrane. The enzyme catalyses di-trans,octa-cis-undecaprenyl diphosphate + H2O = di-trans,octa-cis-undecaprenyl phosphate + phosphate + H(+). Functionally, catalyzes the dephosphorylation of undecaprenyl diphosphate (UPP). Confers resistance to bacitracin. This is Undecaprenyl-diphosphatase from Cupriavidus metallidurans (strain ATCC 43123 / DSM 2839 / NBRC 102507 / CH34) (Ralstonia metallidurans).